A 147-amino-acid chain; its full sequence is Ribonuclease H (147 aa).

In terms of domain architecture, RNase H type-1 spans 1 to 142; that stretch reads MTEIVEIFTD…ADALARSAIT (142 aa). Positions 10, 48, 70, and 134 each coordinate Mg(2+).

Belongs to the RNase H family. In terms of assembly, monomer. It depends on Mg(2+) as a cofactor.

Its subcellular location is the cytoplasm. It catalyses the reaction Endonucleolytic cleavage to 5'-phosphomonoester.. Its function is as follows. Endonuclease that specifically degrades the RNA of RNA-DNA hybrids. The sequence is that of Ribonuclease H from Nitrosococcus oceani (strain ATCC 19707 / BCRC 17464 / JCM 30415 / NCIMB 11848 / C-107).